We begin with the raw amino-acid sequence, 147 residues long: NADH-ubiquinone oxidoreductase chain 3 (147 aa).

A run of 3 helical transmembrane segments spans residues 6–26 (LFIL…LVFA), 60–80 (AICF…VGSL), and 84–104 (TFYS…GFVF).

It belongs to the complex I subunit 3 family.

The protein resides in the mitochondrion membrane. It carries out the reaction a ubiquinone + NADH + 5 H(+)(in) = a ubiquinol + NAD(+) + 4 H(+)(out). In terms of biological role, core subunit of the mitochondrial membrane respiratory chain NADH dehydrogenase (Complex I) that is believed to belong to the minimal assembly required for catalysis. Complex I functions in the transfer of electrons from NADH to the respiratory chain. The immediate electron acceptor for the enzyme is believed to be ubiquinone. This Neurospora crassa (strain ATCC 24698 / 74-OR23-1A / CBS 708.71 / DSM 1257 / FGSC 987) protein is NADH-ubiquinone oxidoreductase chain 3 (ndh-3).